Consider the following 361-residue polypeptide: Queuine tRNA-ribosyltransferase (361 aa).

Asp-92 acts as the Proton acceptor in catalysis. Substrate is bound by residues 92-96 (DSGGF), Asp-146, Gln-189, and Gly-216. Residues 247 to 253 (GVGKPAD) are RNA binding. Asp-266 acts as the Nucleophile in catalysis. The RNA binding; important for wobble base 34 recognition stretch occupies residues 271–275 (TRSGR). Zn(2+) contacts are provided by Cys-304, Cys-306, Cys-309, and His-335.

The protein belongs to the queuine tRNA-ribosyltransferase family. Homodimer. Within each dimer, one monomer is responsible for RNA recognition and catalysis, while the other monomer binds to the replacement base PreQ1. Requires Zn(2+) as cofactor.

The enzyme catalyses 7-aminomethyl-7-carbaguanine + guanosine(34) in tRNA = 7-aminomethyl-7-carbaguanosine(34) in tRNA + guanine. Its pathway is tRNA modification; tRNA-queuosine biosynthesis. In terms of biological role, catalyzes the base-exchange of a guanine (G) residue with the queuine precursor 7-aminomethyl-7-deazaguanine (PreQ1) at position 34 (anticodon wobble position) in tRNAs with GU(N) anticodons (tRNA-Asp, -Asn, -His and -Tyr). Catalysis occurs through a double-displacement mechanism. The nucleophile active site attacks the C1' of nucleotide 34 to detach the guanine base from the RNA, forming a covalent enzyme-RNA intermediate. The proton acceptor active site deprotonates the incoming PreQ1, allowing a nucleophilic attack on the C1' of the ribose to form the product. After dissociation, two additional enzymatic reactions on the tRNA convert PreQ1 to queuine (Q), resulting in the hypermodified nucleoside queuosine (7-(((4,5-cis-dihydroxy-2-cyclopenten-1-yl)amino)methyl)-7-deazaguanosine). In Rickettsia typhi (strain ATCC VR-144 / Wilmington), this protein is Queuine tRNA-ribosyltransferase.